Consider the following 116-residue polypeptide: MTEQTDAAMPIKFTDAAAIKVKGLLEEEQNPELKLRVYVTGGGCSGFQYGFTFDEKSSADDFVIEKQGVKLVVDPMSLQYLVGGEVDYTSGLEGSRFFVKNPNASSTCGCGASFSV.

Iron-sulfur cluster-binding residues include Cys-44, Cys-108, and Cys-110.

It belongs to the HesB/IscA family. As to quaternary structure, homodimer. Requires iron-sulfur cluster as cofactor.

In terms of biological role, required for insertion of 4Fe-4S clusters for at least IspG. The protein is Iron-sulfur cluster insertion protein ErpA of Shewanella denitrificans (strain OS217 / ATCC BAA-1090 / DSM 15013).